The following is a 478-amino-acid chain: Shikimate biosynthesis protein AroDE (478 aa).

A 3-dehydroquinate dehydratase region spans residues 1–208 (MLCTTISGPS…LKHHYFYNFA (208 aa)). 3-dehydroquinate contacts are provided by residues Ser21, 29–31 (EMR), and 55–57 (AWK). His110 (proton donor/acceptor; for 3-dehydroquinate dehydratase activity) is an active-site residue. Lys133 (schiff-base intermediate with substrate; for 3-dehydroquinate dehydratase activity) is an active-site residue. Residues Arg171 and Gln196 each coordinate 3-dehydroquinate. The tract at residues 209–478 (SLSAQSPICA…VLASLFSIAP (270 aa)) is shikimate 5-dehydrogenase. A shikimate-binding site is contributed by 226–228 (SIG). The Proton acceptor; for shikimate dehydrogenase activity role is filled by Lys277. Shikimate-binding residues include Asn298 and Asp313. NADP(+)-binding positions include 337 to 341 (GAGGA), 360 to 362 (NRT), and Gly435. Gln442 contributes to the shikimate binding site.

The protein in the N-terminal section; belongs to the type-I 3-dehydroquinase family. It in the C-terminal section; belongs to the shikimate dehydrogenase family.

It catalyses the reaction 3-dehydroquinate = 3-dehydroshikimate + H2O. The catalysed reaction is shikimate + NADP(+) = 3-dehydroshikimate + NADPH + H(+). It functions in the pathway metabolic intermediate biosynthesis; chorismate biosynthesis; chorismate from D-erythrose 4-phosphate and phosphoenolpyruvate: step 3/7. The protein operates within metabolic intermediate biosynthesis; chorismate biosynthesis; chorismate from D-erythrose 4-phosphate and phosphoenolpyruvate: step 4/7. Functionally, bifunctional enzyme that catalyzes two sequential steps of the aromatic amino acids biosynthetic pathway. In the first reaction, the AroD domain catalyzes the cis-dehydration of 3-dehydroquinate (DHQ) and introduces the first double bond of the aromatic ring to yield 3-dehydroshikimate; in the second reaction, the AroE domain catalyzes the reversible NADPH linked reduction of 3-dehydroshikimate (DHSA) to yield shikimate (SA). The polypeptide is Shikimate biosynthesis protein AroDE (Chlamydia trachomatis serovar D (strain ATCC VR-885 / DSM 19411 / UW-3/Cx)).